A 95-amino-acid chain; its full sequence is Co-chaperonin GroES (95 aa).

This sequence belongs to the GroES chaperonin family. Heptamer of 7 subunits arranged in a ring. Interacts with the chaperonin GroEL.

The protein localises to the cytoplasm. Together with the chaperonin GroEL, plays an essential role in assisting protein folding. The GroEL-GroES system forms a nano-cage that allows encapsulation of the non-native substrate proteins and provides a physical environment optimized to promote and accelerate protein folding. GroES binds to the apical surface of the GroEL ring, thereby capping the opening of the GroEL channel. The chain is Co-chaperonin GroES from Chlorobaculum tepidum (strain ATCC 49652 / DSM 12025 / NBRC 103806 / TLS) (Chlorobium tepidum).